Consider the following 472-residue polypeptide: MIFVIESKLLQIYRNRNRNINFYTTMDNIMSAEYYLSLYAKYNSKNLDVFRNMLQAIEPSGNNYHILHAYCGIKGLDERFVEELLHRGYSPNETDDDGNYPLHIASKINNNRIVAMLLTHGADPNACDKHNKTPLYYLSGTDDEVIERINLLVQYGAKINNSVDEEGCGPLLACTDPSERVFKKIMSIGFEARIVDKFGKNHIHRHLMSDNPKASTISWMMKLGISPSKPDHDGNTPLHIVCSKTVKNVDIIDLLLPSTDVNKQNKFGDSPLTLLIKTLSPAHLINKLLSTSNVITDQTVNICIFYDRDDVLEIINDKGKQYDSTDFKMAVEVGSIRCVKYLLDNDIICEDAMYYAVLSEYETMVDYLLFNHFSVDSVVNGHTCMSECVRLNNPVILSKLMLHNPTSETMYLTMKAIEKDKLDKSIIIPFIAYFVLMHPDFCKNRRYFTSYKRFVTDYVHEGVSYEVFDDYF.

ANK repeat units lie at residues 97–126 (DGNY…DPNA), 130–161 (HNKT…KINN), 233–263 (DGNT…DVNK), 267–297 (FGDS…VITD), 322–351 (YDST…ICED), and 353–377 (MYYA…SVDS).

This sequence belongs to the orthopoxvirus OPG037 protein family. In terms of assembly, may interact with host caspase-9-Apaf-1 complex.

The protein resides in the host cytoplasm. In terms of biological role, inhibits host apoptosis. Acts by associating with host apoptosome. The polypeptide is Inhibitor of Apoptosis OPG037 (OPG037) (Homo sapiens (Human)).